A 159-amino-acid chain; its full sequence is Small ribosomal subunit protein uS17y (159 aa).

The protein belongs to the universal ribosomal protein uS17 family.

Its subcellular location is the cytoplasm. In Arabidopsis thaliana (Mouse-ear cress), this protein is Small ribosomal subunit protein uS17y (RPS11B).